The sequence spans 392 residues: Phosphoglycerate kinase (392 aa).

Residues 21–23, Arg36, 59–62, Arg118, and Arg151 each bind substrate; these read DFN and HLGR. ATP contacts are provided by residues Lys202, Glu321, and 347 to 350; that span reads GGDS.

The protein belongs to the phosphoglycerate kinase family. Monomer.

Its subcellular location is the cytoplasm. The enzyme catalyses (2R)-3-phosphoglycerate + ATP = (2R)-3-phospho-glyceroyl phosphate + ADP. It functions in the pathway carbohydrate degradation; glycolysis; pyruvate from D-glyceraldehyde 3-phosphate: step 2/5. The chain is Phosphoglycerate kinase from Symbiobacterium thermophilum (strain DSM 24528 / JCM 14929 / IAM 14863 / T).